The primary structure comprises 282 residues: NADPH-dependent 7-cyano-7-deazaguanine reductase (282 aa).

88-90 lines the substrate pocket; it reads IES. 90-91 contributes to the NADPH binding site; sequence SK. Residue Cys-190 is the Thioimide intermediate of the active site. Residue Asp-197 is the Proton donor of the active site. 229-230 is a substrate binding site; sequence HE. Position 258–259 (258–259) interacts with NADPH; sequence RG.

The protein belongs to the GTP cyclohydrolase I family. QueF type 2 subfamily. In terms of assembly, homodimer.

The protein resides in the cytoplasm. The catalysed reaction is 7-aminomethyl-7-carbaguanine + 2 NADP(+) = 7-cyano-7-deazaguanine + 2 NADPH + 3 H(+). It participates in tRNA modification; tRNA-queuosine biosynthesis. In terms of biological role, catalyzes the NADPH-dependent reduction of 7-cyano-7-deazaguanine (preQ0) to 7-aminomethyl-7-deazaguanine (preQ1). This chain is NADPH-dependent 7-cyano-7-deazaguanine reductase, found in Shigella dysenteriae serotype 1 (strain Sd197).